We begin with the raw amino-acid sequence, 329 residues long: DNA-directed RNA polymerase subunit alpha (329 aa).

Residues 1–234 (MQGSVTEFLR…EQLDAFVELR (234 aa)) are alpha N-terminal domain (alpha-NTD). The segment at 248–329 (FDPILLRPVD…WPPASLVDDL (82 aa)) is alpha C-terminal domain (alpha-CTD).

It belongs to the RNA polymerase alpha chain family. In terms of assembly, homodimer. The RNAP catalytic core consists of 2 alpha, 1 beta, 1 beta' and 1 omega subunit. When a sigma factor is associated with the core the holoenzyme is formed, which can initiate transcription.

It carries out the reaction RNA(n) + a ribonucleoside 5'-triphosphate = RNA(n+1) + diphosphate. DNA-dependent RNA polymerase catalyzes the transcription of DNA into RNA using the four ribonucleoside triphosphates as substrates. The polypeptide is DNA-directed RNA polymerase subunit alpha (Shewanella violacea (strain JCM 10179 / CIP 106290 / LMG 19151 / DSS12)).